A 233-amino-acid chain; its full sequence is UPF0758 protein TTE0897 (233 aa).

The 123-residue stretch at 108–230 (SVTSPEDVIN…GISLKEKGYY (123 aa)) folds into the MPN domain. The Zn(2+) site is built by histidine 179, histidine 181, and aspartate 192. The JAMM motif motif lies at 179 to 192 (HNHPSGDPTPSRED).

It belongs to the UPF0758 family.

In Caldanaerobacter subterraneus subsp. tengcongensis (strain DSM 15242 / JCM 11007 / NBRC 100824 / MB4) (Thermoanaerobacter tengcongensis), this protein is UPF0758 protein TTE0897.